Consider the following 38-residue polypeptide: Large ribosomal subunit protein bL36B (38 aa).

It belongs to the bacterial ribosomal protein bL36 family.

This Prochlorococcus marinus (strain MIT 9515) protein is Large ribosomal subunit protein bL36B.